The chain runs to 744 residues: MEQTYQYAWIIPFLPLPVPMLIGLGLLFFPTATKSLRRMWAFQSVLLLSIVMIFSINLSIQQINSSSVYQYVWSWIINNDFSLELGYLIDPLTSIMSILITTVGIMVLIYSDNYMSHDHGYLRFFAYMSFFSTSMLGLVTSSNLIQIYIFWELVGIRSYLLIGFWFTRPVAAKACQKAFVTNRVGDFGLLLGILGFYWITGSFEFRNLFQIFNNLISNNEVNFLFVTLCAVLLFAGAIAKSAQFPLHVWLPDAMEGPTPISALIHAATMVAAGIFLVARLLPLFIVIPHIMNFISLIGIITVFLGATLALAQKDIKRGLAYSTMSQLGYMMLALGMGSYRSALFHLITHAYSKALLFLGSGSVIHSMETLVGYCPKKSQNMVLMGGLTKHVPITKTSFFLGTLSLCGIPPLACFWSKDEILNDSWLYSPIFAIIAWSTAGLTAFYMCRMYLLTFEGHLNVHFQNYSGKKNTPFYSISVWGKEGSKISKKNFSLVTLLKMKTNGRASFFSNKVYKIDENVRSLIQPFLSISYFVNTKTYSYPYESDNTMLFPILILVLFTLFVGFLGIPFNQDGVDLDILSKWLTPSINLLHKNSNNSIDWYEFCKDAVFSVSISSFGIFIAFFLYKPVYSSFQNLDLINSFVKIGPKRIFFDKIKNGIYDWSYNRGYIDAFYGTFLTVGMRKLAEFAHFFDRRIIDGIPNGVGLMSFFVAEVIKSVGGGRISSYLFFYFSYLSFFLLIYYFFHF.

Transmembrane regions (helical) follow at residues 9-29 (WIIP…LLFF), 40-60 (WAFQ…NLSI), 89-109 (IDPL…MVLI), 125-145 (FAYM…SNLI), 147-167 (IYIF…FWFT), 185-205 (GDFG…SFEF), 219-239 (NEVN…GAIA), 258-278 (TPIS…FLVA), 290-312 (IMNF…ALAQ), 327-347 (LGYM…FHLI), 354-374 (ALLF…VGYC), 396-416 (TSFF…CFWS), 425-445 (WLYS…TAFY), 549-569 (LFPI…GIPF), 608-628 (VFSV…YKPV), and 724-744 (YLFF…FFHF).

It belongs to the complex I subunit 5 family. In terms of assembly, NDH is composed of at least 16 different subunits, 5 of which are encoded in the nucleus.

It is found in the plastid. It localises to the chloroplast thylakoid membrane. It carries out the reaction a plastoquinone + NADH + (n+1) H(+)(in) = a plastoquinol + NAD(+) + n H(+)(out). It catalyses the reaction a plastoquinone + NADPH + (n+1) H(+)(in) = a plastoquinol + NADP(+) + n H(+)(out). Functionally, NDH shuttles electrons from NAD(P)H:plastoquinone, via FMN and iron-sulfur (Fe-S) centers, to quinones in the photosynthetic chain and possibly in a chloroplast respiratory chain. The immediate electron acceptor for the enzyme in this species is believed to be plastoquinone. Couples the redox reaction to proton translocation, and thus conserves the redox energy in a proton gradient. The sequence is that of NAD(P)H-quinone oxidoreductase subunit 5, chloroplastic (ndhF) from Gerbera jamesonii (Transvaal daisy).